A 1123-amino-acid chain; its full sequence is Translation initiation factor IF-2 (1123 aa).

2 disordered regions span residues 52–452 (LLKA…KVHI) and 480–512 (LARPSKPKSQQKAAPKPVAAMRKRRKETTRQRQ). Composition is skewed to low complexity over residues 54–73 (KAGSAPRAAASPSKPAPGKA), 94–113 (KPAASSPPAAPAAPTKAKSP), and 121–133 (AAPSRPAAPKASA). Residues 170-187 (PPSPPARPVPQQPSPPSA) show a composition bias toward pro residues. A compositionally biased stretch (low complexity) spans 193–206 (APIRRAAPNDAPRP). Pro residues-rich tracts occupy residues 207 to 217 (ANAPPSRPQPK) and 258 to 268 (SPRPAVSPRPS). The span at 285 to 304 (RPGAPTRPGTGAGRPSRPGG) shows a compositional bias: low complexity. Residues 320-339 (GNRGEGGRPPGGARPAGGGN) show a composition bias toward gly residues. Pro residues predominate over residues 388 to 403 (ATPPVSRPTATPPSPA). Residues 412–422 (FRPGAGPGGQR) show a composition bias toward gly residues. Over residues 425-439 (GRPDWDDSAKLDALR) the composition is skewed to basic and acidic residues. Positions 486–499 (PKSQQKAAPKPVAA) are enriched in low complexity. Residues 500 to 512 (MRKRRKETTRQRQ) are compositionally biased toward basic residues. The 173-residue stretch at 615 to 787 (RRPPVVTVMG…LLLVTEVEDL (173 aa)) folds into the tr-type G domain. A G1 region spans residues 624 to 631 (GHVDHGKT). Position 624–631 (624–631 (GHVDHGKT)) interacts with GTP. The tract at residues 649-653 (GITQH) is G2. The G3 stretch occupies residues 674–677 (DTPG). Residues 674–678 (DTPGH) and 728–731 (NKID) contribute to the GTP site. Positions 728-731 (NKID) are G4. Residues 764–766 (SAI) are G5.

It belongs to the TRAFAC class translation factor GTPase superfamily. Classic translation factor GTPase family. IF-2 subfamily.

It localises to the cytoplasm. Its function is as follows. One of the essential components for the initiation of protein synthesis. Protects formylmethionyl-tRNA from spontaneous hydrolysis and promotes its binding to the 30S ribosomal subunits. Also involved in the hydrolysis of GTP during the formation of the 70S ribosomal complex. In Synechococcus sp. (strain WH7803), this protein is Translation initiation factor IF-2.